The following is an 883-amino-acid chain: DNA mismatch repair protein MutS (883 aa).

619 to 626 (GPNMGGKS) serves as a coordination point for ATP.

Belongs to the DNA mismatch repair MutS family.

Functionally, this protein is involved in the repair of mismatches in DNA. It is possible that it carries out the mismatch recognition step. This protein has a weak ATPase activity. The polypeptide is DNA mismatch repair protein MutS (Marinomonas sp. (strain MWYL1)).